The primary structure comprises 323 residues: Acetyl-coenzyme A carboxylase carboxyl transferase subunit alpha (323 aa).

Residues 32-293 (NISEEVAKLQ…RKALAAQLES (262 aa)) form the CoA carboxyltransferase C-terminal domain.

Belongs to the AccA family. Acetyl-CoA carboxylase is a heterohexamer composed of biotin carboxyl carrier protein (AccB), biotin carboxylase (AccC) and two subunits each of ACCase subunit alpha (AccA) and ACCase subunit beta (AccD).

Its subcellular location is the cytoplasm. The enzyme catalyses N(6)-carboxybiotinyl-L-lysyl-[protein] + acetyl-CoA = N(6)-biotinyl-L-lysyl-[protein] + malonyl-CoA. Its pathway is lipid metabolism; malonyl-CoA biosynthesis; malonyl-CoA from acetyl-CoA: step 1/1. In terms of biological role, component of the acetyl coenzyme A carboxylase (ACC) complex. First, biotin carboxylase catalyzes the carboxylation of biotin on its carrier protein (BCCP) and then the CO(2) group is transferred by the carboxyltransferase to acetyl-CoA to form malonyl-CoA. This chain is Acetyl-coenzyme A carboxylase carboxyl transferase subunit alpha, found in Alcanivorax borkumensis (strain ATCC 700651 / DSM 11573 / NCIMB 13689 / SK2).